A 346-amino-acid chain; its full sequence is MTSVEELRACALLQDCADQLSVLGNIIRPGAETQQRTELHLKTAQLMAGSSLSNFSGELKSQKHFKIQQTLLASDNLAKVQKDRQFVSDVINALLEELQKKNNFQSLFSAVAEERKKKAELLDIINREEEGRRQIKKLQKQLLDIRKEKTEECERLEEEVAILKDQVQDMRVRTNQQGKFVKSCAEQLVYQESKHNSYKENELEDEVKMLQEKIEEEKNVHFETEAFLKQQHANLKQKLQYWIHRYEKDMEEKEQEITALQNKRNSSQTRIQDLSKKCKDMENVVIEDRIEKEHLRAQMEKEQREKNAATKIQAWWRGTLVRKGPRSKKADKSKKKDGKKGKKKRK.

The span at 299 to 308 shows a compositional bias: basic and acidic residues; the sequence is MEKEQREKNA. Residues 299–346 are disordered; it reads MEKEQREKNAATKIQAWWRGTLVRKGPRSKKADKSKKKDGKKGKKKRK. Residues 305-334 enclose the IQ domain; it reads EKNAATKIQAWWRGTLVRKGPRSKKADKSK. Residues 323 to 346 are compositionally biased toward basic residues; that stretch reads KGPRSKKADKSKKKDGKKGKKKRK.

It belongs to the DRC9 family. As to quaternary structure, component of the nexin-dynein regulatory complex (N-DRC). Interacts (via IQ domain) with calmodulin when calcium levels are low. Does not interact with calmodulin in the presence of Ca(2+). Interacts with hsp70 and may form a complex with camk4 and hsp70. In terms of tissue distribution, detected in adult testis, and at lower levels in brain, kidney and ovary.

The protein localises to the cytoplasm. The protein resides in the cell projection. It localises to the cilium. Its subcellular location is the flagellum. It is found in the cytoskeleton. The protein localises to the flagellum axoneme. Its function is as follows. Component of the nexin-dynein regulatory complex (N-DRC), a key regulator of ciliary/flagellar motility which maintains the alignment and integrity of the distal axoneme and regulates microtubule sliding in motile axonemes. Binds calmodulin when cellular Ca(2+) levels are low and thereby contributes to the regulation of calcium and calmodulin-dependent protein kinase IV (camk4) activity; contributes to the regulation of camk4 signaling cascades. Plays a role in the regulation of definitive hematopoiesis via its effects on camk4. This chain is Dynein regulatory complex protein 9, found in Danio rerio (Zebrafish).